Reading from the N-terminus, the 202-residue chain is High mobility group protein B3 (202 aa).

2 DNA-binding regions (HMG box) span residues 9 to 79 (PKGK…KDYG) and 93 to 161 (PKRP…ADYK). Cys23 and Cys45 each carry cysteine sulfonic acid (-SO3H); alternate. The cysteines at positions 23 and 45 are disulfide-linked. Residues 71 to 98 (YDREMKDYGPAKGGKKKKDPNAPKRPPS) form a disordered region. The residue at position 104 (Cys104) is a Cysteine sulfonic acid (-SO3H). A disordered region spans residues 161–202 (KSKGKFDGAKGAATKAARKKVEEEDEEEEEDEEEEDEDDDDE). A compositionally biased stretch (acidic residues) spans 183 to 202 (EEDEEEEEDEEEEDEDDDDE).

It belongs to the HMGB family. Reduction/oxidation of cysteine residues Cys-23, Cys-45 and Cys-104 and a possible intramolecular disulfide bond involving Cys-23 and Cys-45 give rise to different redox forms with specific functional activities in various cellular compartments: 1- fully reduced HMGB3 (HMGB3C23hC45hC104h), 2- disulfide HMGB3 (HMGB3C23-C45C104h) and 3- sulfonyl HMGB3 (HMGB3C23soC45soC104so).

The protein localises to the nucleus. It is found in the chromosome. The protein resides in the cytoplasm. Its function is as follows. Multifunctional protein with various roles in different cellular compartments. May act in a redox sensitive manner. Associates with chromatin and binds DNA with a preference for non-canonical DNA structures such as single-stranded DNA. Can bend DNA and enhance DNA flexibility by looping thus providing a mechanism to promote activities on various gene promoters. Binds to the delta-1 crystallin/ASL1 enhancer. Proposed to be involved in the innate immune response to nucleic acids by acting as a cytoplasmic promiscuous immunogenic DNA/RNA sensor. The protein is High mobility group protein B3 (HMGB3) of Gallus gallus (Chicken).